The sequence spans 249 residues: MALVEKIQLTDDFSVYANPAAKLEVEFIHKEIFIDKCYDVAPFPDDSFIVDAGGNIGMFTLYMKRKYPQSTILAFEPAPATFSTFQRNMELHNVSGVQAHQCGLGREDASLALTFYPQMPGNSTLYAEDKTNQMKSVDQNHPIAKLMQETHEVQVDVKRLSDFLGEVPNLKRVNLLKVDVEGAEMDVLRGLDDEHWDLIDNVVVELCDSKGDFATAKTLLESKGFAVAVERPDWAPPDLKMYMLIAKRN.

Belongs to the FkbM methyltransferase family.

It participates in secondary metabolite biosynthesis. In terms of biological role, methyltransferase; part of the pathway that mediates the biosynthesis of tenellin-type 2-pyridones, iron-chelating compounds involved in iron stress tolerance, competition with the natural competitor fungus Metarhizium robertsii and insect hosts infection. Methylates pyridovericin-N-O-(beta-D-glucopyranoside) produced by the UDP-glucosyltransferase GT1 to yield pyridovericin-N-O-(4-O-methyl-beta-D-glucopyranoside) (PMGP). The pathway begins with the assembly of the polyketide-amino acid backbone by the hybrid PKS-NRPS tenS with the help of the enoyl reductase tenC. These enzymes catalyze the synthesis of the pyrrolidine-2-dione intermediates pretellinin A, 11-hydropretellenin A, 12-hydropretellenin A, 13-hydropretellenin A, 14-hydropretellenin A, 12-oxopretellenin A and prototellinin D. The cytochrome P450 monooxygenase tenA then catalyzes an oxidative ring expansion of pretenellin A and 14-hydropretellenin A to form the 2-pyridone core, leading to pretenellin B and pyridovericin, respectively. The cytochrome P450 monooxygenase tenB is then required for the selective N-hydroxylation of the 2-pyridone nitrogen of yield tellinin and 15-hydroxytellenin (15-HT), respectively. The UDP-glucosyltransferase GT1 and the methyltransferase MT1, located outside the tenS gene cluster, contribute to the stepwise glycosylation and methylation of 15-HT to obtain the glycoside pyridovericin-N-O-(4-O-methyl-beta-D-glucopyranoside) (PMGP). Additional related compounds such as 1-O-methyl-15-HT, (8Z)-1-O-methyl-15-HT, and O-methyltenellin A are also produced but the enzymes involved in their biosynthesis have still to be determined. In Beauveria bassiana (strain ARSEF 2860) (White muscardine disease fungus), this protein is Methyltransferase 1.